The primary structure comprises 700 residues: Interleukin-1 receptor accessory protein-like 1-B (700 aa).

Residues 1 to 18 form the signal peptide; the sequence is MRSRVPLQILLYAAVIRS. Topologically, residues 19–357 are extracellular; it reads LKVVSKRGSV…QLSRRELMYT (339 aa). The 103-residue stretch at 32–134 folds into the Ig-like C2-type 1 domain; it reads TDWSVDYLRY…YCMKVSMALT (103 aa). Cysteine 53 and cysteine 118 are oxidised to a cystine. N-linked (GlcNAc...) asparagine glycans are attached at residues asparagine 63, asparagine 122, asparagine 138, asparagine 213, asparagine 264, and asparagine 331. Ig-like C2-type domains lie at 143–232 and 242–350; these read CYNS…TELT and PKIL…IQLS. Cysteine 164 and cysteine 216 are joined by a disulfide. Cysteine 267 and cysteine 334 form a disulfide bridge. Residues 358–378 traverse the membrane as a helical segment; sequence VELAGGLGAILLMLIFLVSLY. The Cytoplasmic segment spans residues 379-700; that stretch reads KCYRIELMLF…RETSISSVIW (322 aa). The 157-residue stretch at 403 to 559 folds into the TIR domain; the sequence is KDYDAYVSYT…RFWKQLQYEM (157 aa). Residue glutamate 491 is part of the active site. The tract at residues 564–700 is required for synaptic vesicle accumulation during synaptogenesis; sequence PEPKLSHEQV…RETSISSVIW (137 aa).

The protein belongs to the interleukin-1 receptor family.

It localises to the cell membrane. The protein resides in the cytoplasm. It carries out the reaction NAD(+) + H2O = ADP-D-ribose + nicotinamide + H(+). Functionally, may regulate secretion and presynaptic differentiation through inhibition of the activity of N-type voltage-gated calcium channel. During presynaptic differentiation may regulate both synaptic vesicle accumulation in axon terminals and subsequent axon terminal remodeling. This is Interleukin-1 receptor accessory protein-like 1-B (il1rapl1b) from Danio rerio (Zebrafish).